The sequence spans 206 residues: Small ribosomal subunit protein uS4 (206 aa).

An S4 RNA-binding domain is found at 96–156; that stretch reads GRLDNVVYRM…EKSKKQARIK (61 aa).

The protein belongs to the universal ribosomal protein uS4 family. In terms of assembly, part of the 30S ribosomal subunit. Contacts protein S5. The interaction surface between S4 and S5 is involved in control of translational fidelity.

Functionally, one of the primary rRNA binding proteins, it binds directly to 16S rRNA where it nucleates assembly of the body of the 30S subunit. In terms of biological role, with S5 and S12 plays an important role in translational accuracy. This Pasteurella multocida (strain Pm70) protein is Small ribosomal subunit protein uS4.